The following is a 380-amino-acid chain: 12-oxophytodienoate reductase 1 (380 aa).

FMN contacts are provided by residues 35 to 37 (PLT), A68, and Q110. 182 to 185 (HGAH) is a substrate binding site. The Proton donor role is filled by Y187. R234 serves as a coordination point for FMN. R275 lines the substrate pocket. Residues G305 and 326–327 (GR) each bind FMN.

It belongs to the NADH:flavin oxidoreductase/NADH oxidase family. Requires FMN as cofactor.

It carries out the reaction (1S,2S)-OPC-8 + NADP(+) = (9S,13S,15Z)-12-oxophyto-10,15-dienoate + NADPH + H(+). The protein operates within lipid metabolism; oxylipin biosynthesis. Probably involved in the biosynthesis or metabolism of oxylipin signaling molecules. In vitro, reduces cis(-)-12-oxophytodienoic acid (cis(-)-OPDA) and to cis(-)-OPC-8:0. The chain is 12-oxophytodienoate reductase 1 from Oryza sativa subsp. japonica (Rice).